The sequence spans 115 residues: Secreted RxLR effector protein 2 (115 aa).

Residues 1–22 (MICRSPLIVVMLFVIAAHTVLA) form the signal peptide. The short motif at 57 to 82 (RFLRQETTFEKKLGVNDVHAVHAEER) is the RxLR-dEER element.

It belongs to the RxLR effector family.

The protein resides in the secreted. It is found in the host cytoplasm. The protein localises to the host nucleus. Its function is as follows. Effector that acts as a broad suppressor of cell death to interrupt plant immunity. Inhibits cell death induced by cell death-inducing proteins, including the PAMP elicitor INF1 from P.infestans. The sequence is that of Secreted RxLR effector protein 2 from Plasmopara viticola (Downy mildew of grapevine).